The primary structure comprises 201 residues: Ras-related protein Rab-1B (201 aa).

An N-acetylmethionine modification is found at Met1. Residues Ser17, Gly18, Val19, Gly20, Lys21, Ser22, Cys23, Tyr33, Thr34, Glu35, Ser36, Ser39, and Thr40 each coordinate GTP. Position 22 (Ser22) interacts with Mg(2+). A Switch 1 motif is present at residues 30–45 (DDTYTESYISTIGVDF). Positions 40 and 63 each coordinate Mg(2+). The tract at residues 64-83 (TAGQERGRTITSSYYRGAHG) is switch 2 region; required for interaction with REP1/CHM. A Switch 2 motif is present at residues 65-80 (AGQERGRTITSSYYRG). Residues Gly66, Asn121, Lys122, Asp124, Ser151, Ala152, and Lys153 each contribute to the GTP site. The interval 173–201 (MGPGAASGGERPNLKIDSTPVKQAGGGCC) is disordered. 2 S-geranylgeranyl cysteine lipidation sites follow: Cys200 and Cys201. A Cysteine methyl ester modification is found at Cys201.

The protein belongs to the small GTPase superfamily. Rab family. As to quaternary structure, interacts with MICAL1 and MICAL2. Interacts (in GTP-bound form) with MICALCL, MICAL1 and MILCAL3. Interacts with GDI1; the interaction requires the GDP-bound state. Interacts with CHM/REP1; the interaction requires the GDP-bound form and is necessary for prenylation by GGTase II. Interacts with RabGAP TBC1D20. Interacts (in GDP-bound form) with lipid phosphatase MTMR6 (via GRAM domain); the interaction regulates MTMR6 recruitment to the endoplasmic reticulum-Golgi intermediate compartment. Interacts (in GDP-bound form) with lipid phosphatase MTMR7. Mg(2+) is required as a cofactor. Prenylated; by GGTase II, only after interaction of the substrate with Rab escort protein 1 (REP1).

Its subcellular location is the cytoplasm. It is found in the membrane. The protein localises to the preautophagosomal structure membrane. The protein resides in the perinuclear region. It carries out the reaction GTP + H2O = GDP + phosphate + H(+). With respect to regulation, regulated by guanine nucleotide exchange factors (GEFs) which promote the exchange of bound GDP for free GTP. Regulated by GTPase activating proteins (GAPs) including TBC1D20 which increases the GTP hydrolysis activity. Inhibited by GDP dissociation inhibitors (GDIs). Functionally, the small GTPases Rab are key regulators of intracellular membrane trafficking, from the formation of transport vesicles to their fusion with membranes. Rabs cycle between an inactive GDP-bound form and an active GTP-bound form that is able to recruit to membranes different set of downstream effectors directly responsible for vesicle formation, movement, tethering and fusion. Plays a role in the initial events of the autophagic vacuole development which take place at specialized regions of the endoplasmic reticulum. Regulates vesicular transport between the endoplasmic reticulum and successive Golgi compartments. Required to modulate the compacted morphology of the Golgi. Promotes the recruitment of lipid phosphatase MTMR6 to the endoplasmic reticulum-Golgi intermediate compartment. This chain is Ras-related protein Rab-1B (RAB1B), found in Sus scrofa (Pig).